A 545-amino-acid chain; its full sequence is Sphingomyelin phosphodiesterase 5 (545 aa).

The N-terminal 35 residues, 1-35 (MSLRESPFPNGFLEGLHAVGWGLIFPCFWFLDRLI), are a transit peptide targeting the mitochondrion. Over 36–64 (AVCISTTLERMWRLEQECYLHPLKVVFGS) the chain is Mitochondrial matrix. A helical; Signal-anchor for type II membrane protein transmembrane segment spans residues 65–85 (ILFFILFVISTPFALLGFILW). The Mitochondrial intermembrane portion of the chain corresponds to 86–545 (APLQAIRRPF…LSVSLDSEQN (460 aa)). Mg(2+) is bound at residue Glu258. His529 serves as the catalytic Proton acceptor.

It belongs to the neutral sphingomyelinase family. The cofactor is Mg(2+). It depends on Mn(2+) as a cofactor.

The protein resides in the mitochondrion inner membrane. It is found in the endoplasmic reticulum membrane. It carries out the reaction a sphingomyelin + H2O = phosphocholine + an N-acylsphing-4-enine + H(+). The catalysed reaction is N-(hexadecanoyl)-sphing-4-enine-1-phosphocholine + H2O = N-hexadecanoylsphing-4-enine + phosphocholine + H(+). It functions in the pathway lipid metabolism; sphingolipid metabolism. With respect to regulation, activated by the phospholipids cardiolipin, phosphatidylserine, and phosphatidylethanolamine. Strongest activation with cardiolipin. Its function is as follows. Catalyzes the hydrolysis of membrane sphingomyelin to form phosphorylcholine and ceramide. The chain is Sphingomyelin phosphodiesterase 5 from Danio rerio (Zebrafish).